A 172-amino-acid chain; its full sequence is Translation initiation factor IF-3 (172 aa).

It belongs to the IF-3 family. As to quaternary structure, monomer.

Its subcellular location is the cytoplasm. Functionally, IF-3 binds to the 30S ribosomal subunit and shifts the equilibrium between 70S ribosomes and their 50S and 30S subunits in favor of the free subunits, thus enhancing the availability of 30S subunits on which protein synthesis initiation begins. In Haemophilus influenzae (strain ATCC 51907 / DSM 11121 / KW20 / Rd), this protein is Translation initiation factor IF-3.